A 563-amino-acid chain; its full sequence is Probable ganciclovir kinase (563 aa).

A compositionally biased stretch (polar residues) spans 1 to 16 (MDNGVETPQGQKTQPI). Residues 1 to 33 (MDNGVETPQGQKTQPINLPPDRKRLRKHDGLGK) are disordered. Residues 202 to 210 (LGVGAYGKV) and Lys219 contribute to the ATP site. Asp314 serves as the catalytic Proton acceptor.

It belongs to the protein kinase superfamily. Tyr protein kinase family. HCMV ganciclovir subfamily.

Phosphorylates the antiviral nucleoside analog ganciclovir. The polypeptide is Probable ganciclovir kinase (U69) (Human herpesvirus 6B (strain Z29) (HHV-6 variant B)).